An 81-amino-acid chain; its full sequence is MTDLFSTPDHTLDAQGLRCPEPVMMVRKTVRTMQTGETLLIIADDPATTRDIPGFCTFMEHELIAQETEALPYRYLLRKGA.

Residue Cys19 is the Cysteine persulfide intermediate of the active site.

It belongs to the sulfur carrier protein TusA family. Interacts with IscS.

It is found in the cytoplasm. It functions in the pathway tRNA modification. Functionally, sulfur carrier protein involved in sulfur trafficking in the cell. Part of a sulfur-relay system required for 2-thiolation during synthesis of 2-thiouridine of the modified wobble base 5-methylaminomethyl-2-thiouridine (mnm(5)s(2)U) in tRNA. Interacts with IscS and stimulates its cysteine desulfurase activity. Accepts an activated sulfur from IscS, which is then transferred to TusD, and thus determines the direction of sulfur flow from IscS to 2-thiouridine formation. Also appears to be involved in sulfur transfer for the biosynthesis of molybdopterin. The chain is Sulfur carrier protein TusA from Enterobacter sp. (strain 638).